Consider the following 234-residue polypeptide: Response regulator RppA (234 aa).

The region spanning 2 to 118 (RILLVEDETD…ELLARLRALQ (117 aa)) is the Response regulatory domain. A 4-aspartylphosphate modification is found at Asp53. Residues 126 to 232 (PQILTLGNFS…VPGQGYRFTL (107 aa)) constitute a DNA-binding region (ompR/PhoB-type).

Interacts with histidine kinase Hik2; may accept phosphate from Hik2.

Its function is as follows. Member of two-component regulatory system RppA/RppB, involved in the establishment of the appropriate stoichiometry between the 2 photosystems. It senses changes in the plastoquinone (PQ) redox poise. Another group shows this two-component pair, renamed NrsR/NrsS, controls the nickel-dependent expression of the nrsBACD operon; they suggest the photosystem-related activities seen earlier are due to the expression of NrsS (RppB) in the absence of its natural substrate NrsR (RppA). May accept phosphate from Hik2 in a possible Hik2/RppA two-component system. This is Response regulator RppA from Synechocystis sp. (strain ATCC 27184 / PCC 6803 / Kazusa).